The following is a 72-amino-acid chain: MSSGCSCGSGCKCGDNCSCSMYPDMETNTTVTMIEGVAPLKMYSEGSEKSFGAEGGNGCKCGSNCKCDPCNC.

Belongs to the metallothionein superfamily. Type 15 family.

Metallothioneins have a high content of cysteine residues that bind various heavy metals. This Erythranthe guttata (Yellow monkey flower) protein is Metallothionein-like protein 1.